A 697-amino-acid chain; its full sequence is Probable translocation protein y4yR (697 aa).

Helical transmembrane passes span 20–40, 42–62, 67–87, 107–127, 200–220, 235–255, 293–313, and 372–392; these read VALMLLLAVSMMVMPIPVMAV, ALIGFNMGLAVLLLMAALYVS, FSSLPGVILLSTVFRLALTVA, SFVISGNIVVGFVIFLVVTMV, SIAGLVVICINMLGGISIGLL, LLTIGDALISQIPALLLSITA, VAMGFVPGFPLPVFFMLAAVF, and IARISQLVSADLGIIVPPIPV. The segment at 675–697 is disordered; the sequence is IRLPPSNGTSGEPRSIRPSATTG. Residues 680–697 show a composition bias toward polar residues; the sequence is SNGTSGEPRSIRPSATTG.

The protein belongs to the FHIPEP (flagella/HR/invasion proteins export pore) family.

The protein resides in the cell inner membrane. Functionally, could be involved in the secretion of an unknown factor. This chain is Probable translocation protein y4yR, found in Sinorhizobium fredii (strain NBRC 101917 / NGR234).